The chain runs to 85 residues: Small ribosomal subunit protein bS20 (85 aa).

Belongs to the bacterial ribosomal protein bS20 family.

Functionally, binds directly to 16S ribosomal RNA. In Borreliella afzelii (strain PKo) (Borrelia afzelii), this protein is Small ribosomal subunit protein bS20.